Reading from the N-terminus, the 225-residue chain is NAD(P)H-quinone oxidoreductase subunit K, chloroplastic (225 aa).

The [4Fe-4S] cluster site is built by C43, C44, C108, and C139.

It belongs to the complex I 20 kDa subunit family. As to quaternary structure, NDH is composed of at least 16 different subunits, 5 of which are encoded in the nucleus. Requires [4Fe-4S] cluster as cofactor.

Its subcellular location is the plastid. It localises to the chloroplast thylakoid membrane. It catalyses the reaction a plastoquinone + NADH + (n+1) H(+)(in) = a plastoquinol + NAD(+) + n H(+)(out). It carries out the reaction a plastoquinone + NADPH + (n+1) H(+)(in) = a plastoquinol + NADP(+) + n H(+)(out). Its function is as follows. NDH shuttles electrons from NAD(P)H:plastoquinone, via FMN and iron-sulfur (Fe-S) centers, to quinones in the photosynthetic chain and possibly in a chloroplast respiratory chain. The immediate electron acceptor for the enzyme in this species is believed to be plastoquinone. Couples the redox reaction to proton translocation, and thus conserves the redox energy in a proton gradient. This chain is NAD(P)H-quinone oxidoreductase subunit K, chloroplastic, found in Eucalyptus globulus subsp. globulus (Tasmanian blue gum).